The sequence spans 146 residues: Acidic phospholipase A2 2 (146 aa).

An N-terminal signal peptide occupies residues 1–21; that stretch reads MNPAHLLILAAVCVSSLGASS. A propeptide spanning residues 22 to 27 is cleaved from the precursor; that stretch reads NRPMPL. 7 disulfide bridges follow: cysteine 38-cysteine 98, cysteine 53-cysteine 145, cysteine 55-cysteine 71, cysteine 70-cysteine 126, cysteine 77-cysteine 119, cysteine 87-cysteine 112, and cysteine 105-cysteine 117. Ca(2+)-binding residues include tyrosine 54, glycine 56, and glycine 58. Residue histidine 74 is part of the active site. Aspartate 75 contributes to the Ca(2+) binding site. The active site involves aspartate 120.

It belongs to the phospholipase A2 family. Group I subfamily. D49 sub-subfamily. Ca(2+) serves as cofactor. As to expression, expressed by the venom gland.

It is found in the secreted. The enzyme catalyses a 1,2-diacyl-sn-glycero-3-phosphocholine + H2O = a 1-acyl-sn-glycero-3-phosphocholine + a fatty acid + H(+). PLA2 catalyzes the calcium-dependent hydrolysis of the 2-acyl groups in 3-sn-phosphoglycerides. This is Acidic phospholipase A2 2 from Naja kaouthia (Monocled cobra).